Reading from the N-terminus, the 422-residue chain is MTTIVGVRAREVLDSRGFPTVEAEVELEGGARGRAMVPSGASTGTHEALELRDGGKRYLGKGVRRAVENVNERIAPELVGMDALDQEGVDRAMLELDGTPNKANLGANAVLAVSLAVARAAAEALGLPLYRYLGGVQGVTLPVPLMNVINGGKHADNRVDFQEFMLVPAGAGSFAEALRIGAEVFHTLKAVLKEKGYSTNVGDEGGFAPDLRSNEEAVELLLLAIERAGYTPGQEVSLALDPATSELYRDGKYHLEGEGKVLSSEEMVAFWEAWVEKYPIRSIEDGLAEDDWEGWRLLTERLGGKVQLVGDDLFVTNPERLRAGIERGVANAILVKVNQIGTLSETLEAIRLAQRSGYRAVISHRSGETEDSFIADLAVAVNAGQIKTGSLSRSDRLAKYNQLLRIEEELGRAARFLGYAAF.

Gln-162 is a binding site for (2R)-2-phosphoglycerate. Catalysis depends on Glu-204, which acts as the Proton donor. Residues Asp-241, Glu-284, and Asp-311 each contribute to the Mg(2+) site. (2R)-2-phosphoglycerate contacts are provided by Lys-336, Arg-365, Ser-366, and Lys-387. Catalysis depends on Lys-336, which acts as the Proton acceptor.

Belongs to the enolase family. Mg(2+) serves as cofactor.

Its subcellular location is the cytoplasm. It is found in the secreted. The protein localises to the cell surface. The enzyme catalyses (2R)-2-phosphoglycerate = phosphoenolpyruvate + H2O. It participates in carbohydrate degradation; glycolysis; pyruvate from D-glyceraldehyde 3-phosphate: step 4/5. Functionally, catalyzes the reversible conversion of 2-phosphoglycerate (2-PG) into phosphoenolpyruvate (PEP). It is essential for the degradation of carbohydrates via glycolysis. The sequence is that of Enolase from Thermus thermophilus (strain ATCC 27634 / DSM 579 / HB8).